The primary structure comprises 308 residues: MSISATLVKELREKTNAGMMDCKKALEATSGDFNAAVEWLRVKGLGAAAKKADRIAAEGAVFAELHGNTGVVIEINSETDFVARNDGFKALAANVVSHLAKTNLEGDVLAQAYAADSSKKLGDLFTEATATIGEKIVLRRQEKYTATATSLVHTYLHGEGKIGVMIEVGASKPEAVSNPALKTFAQDVALHIAAMNPMAISSEQIPADVVSKEKEILTAKNLESGKKPEMIEKIVEGQIRKFLAENCLLDQPFVKNPDMKVSDLAKSVGKEIGADVTVKRFVRFELGAGIEKKTNDFAAEVAAQMKGH.

The tract at residues 79–82 is involved in Mg(2+) ion dislocation from EF-Tu; sequence TDFV.

This sequence belongs to the EF-Ts family.

The protein localises to the cytoplasm. Associates with the EF-Tu.GDP complex and induces the exchange of GDP to GTP. It remains bound to the aminoacyl-tRNA.EF-Tu.GTP complex up to the GTP hydrolysis stage on the ribosome. This is Elongation factor Ts from Bdellovibrio bacteriovorus (strain ATCC 15356 / DSM 50701 / NCIMB 9529 / HD100).